The primary structure comprises 152 residues: SsrA-binding protein (152 aa).

Belongs to the SmpB family.

It localises to the cytoplasm. Required for rescue of stalled ribosomes mediated by trans-translation. Binds to transfer-messenger RNA (tmRNA), required for stable association of tmRNA with ribosomes. tmRNA and SmpB together mimic tRNA shape, replacing the anticodon stem-loop with SmpB. tmRNA is encoded by the ssrA gene; the 2 termini fold to resemble tRNA(Ala) and it encodes a 'tag peptide', a short internal open reading frame. During trans-translation Ala-aminoacylated tmRNA acts like a tRNA, entering the A-site of stalled ribosomes, displacing the stalled mRNA. The ribosome then switches to translate the ORF on the tmRNA; the nascent peptide is terminated with the 'tag peptide' encoded by the tmRNA and targeted for degradation. The ribosome is freed to recommence translation, which seems to be the essential function of trans-translation. This chain is SsrA-binding protein, found in Helicobacter pylori (strain Shi470).